A 38-amino-acid chain; its full sequence is Photosystem II reaction center protein L (38 aa).

The helical transmembrane segment at 17 to 37 threads the bilayer; that stretch reads SLFWGLLLIFVLAILFSNYFF.

The protein belongs to the PsbL family. In terms of assembly, PSII is composed of 1 copy each of membrane proteins PsbA, PsbB, PsbC, PsbD, PsbE, PsbF, PsbH, PsbI, PsbJ, PsbK, PsbL, PsbM, PsbT, PsbX, PsbY, PsbZ, Psb30/Ycf12, at least 3 peripheral proteins of the oxygen-evolving complex and a large number of cofactors. It forms dimeric complexes.

Its subcellular location is the plastid. The protein resides in the chloroplast thylakoid membrane. Its function is as follows. One of the components of the core complex of photosystem II (PSII). PSII is a light-driven water:plastoquinone oxidoreductase that uses light energy to abstract electrons from H(2)O, generating O(2) and a proton gradient subsequently used for ATP formation. It consists of a core antenna complex that captures photons, and an electron transfer chain that converts photonic excitation into a charge separation. This subunit is found at the monomer-monomer interface and is required for correct PSII assembly and/or dimerization. This is Photosystem II reaction center protein L from Chara vulgaris (Common stonewort).